The following is a 348-amino-acid chain: Protein arginine N-methyltransferase 1 (348 aa).

The 303-residue stretch at 20–322 (EQHYFNSYDH…EKNNRDLNIK (303 aa)) folds into the SAM-dependent MTase PRMT-type domain. H33, R42, G66, D88, and E117 together coordinate S-adenosyl-L-methionine. Catalysis depends on residues E132 and E141.

Belongs to the class I-like SAM-binding methyltransferase superfamily. Protein arginine N-methyltransferase family. Homodimer. The dimers can then associate to form a ring-shaped homohexamer. Interacts with NPL3, BRE5, MTR4, SNF2, SUM1, and SSD1.

Its subcellular location is the nucleus. It catalyses the reaction L-arginyl-[protein] + S-adenosyl-L-methionine = N(omega)-methyl-L-arginyl-[protein] + S-adenosyl-L-homocysteine + H(+). The enzyme catalyses L-arginyl-[protein] + 2 S-adenosyl-L-methionine = N(omega),N(omega)-dimethyl-L-arginyl-[protein] + 2 S-adenosyl-L-homocysteine + 2 H(+). S-adenosyl-L-methionine-dependent protein-arginine N-methyltransferase that catalyzes both the mono- and asymmetric (type I) dimethylation of the guanidino nitrogens of arginine residues in a variety of RNA-binding proteins such as heterogeneous nuclear ribonucleoproteins (hnRNPs) and small nuclear ribonucleoproteins (snRNPs). Methylates NAB2, NPL3, HRP1 and YRA1, shuttling hnRNPs involved in mRNA processing and export, facilitating their export out of the nucleus. Methylation of NPL3 weakens its interaction with THO2, a component of the TREX (transcription/export) complex important for transcriptional elongation and recruitment of mRNA export factors. Methylates the hnRNP HRB1, but does not influence its subcellular location. Methylates the nucleolar proteins GAR1, NOP1 and NSR1. Methylates the snRNP SNP1 and modulates the cotranscriptional recruitment of splicing factors. Dimethylates free histone H4 (HHF1/HHF2) at 'Arg-4' (H4R3me2a) and plays a role in preservation and establishment of silent chromatin domains. Mono- and dimethylates ribosomal protein S2 (RPS2) at 'Arg-11'. Methylates the catalytic subunit of the SWI/SNF chromatin-remodeling complex SNF2. This Saccharomyces cerevisiae (strain ATCC 204508 / S288c) (Baker's yeast) protein is Protein arginine N-methyltransferase 1.